The primary structure comprises 429 residues: ATP-dependent RNA helicase RhlB (429 aa).

The short motif at 9 to 37 (DKFAQMGLEPEVLAGLESKGFHYCTPIQA) is the Q motif element. Residues 40–219 (LPLLVEGHDL…YEHMNHPEHV (180 aa)) form the Helicase ATP-binding domain. 53-60 (AQTGTGKT) serves as a coordination point for ATP. A DEAD box motif is present at residues 165 to 168 (DEAD). The 148-residue stretch at 243–390 (KMLLLLSLME…VSKYDREALL (148 aa)) folds into the Helicase C-terminal domain. The tract at residues 399 to 429 (VFRNRQPVNRNMRDRQGGGNSNNRRRPPRKS) is disordered.

This sequence belongs to the DEAD box helicase family. RhlB subfamily. As to quaternary structure, component of the RNA degradosome, which is a multiprotein complex involved in RNA processing and mRNA degradation.

It is found in the cytoplasm. It carries out the reaction ATP + H2O = ADP + phosphate + H(+). Functionally, DEAD-box RNA helicase involved in RNA degradation. Has RNA-dependent ATPase activity and unwinds double-stranded RNA. The polypeptide is ATP-dependent RNA helicase RhlB (Aeromonas hydrophila subsp. hydrophila (strain ATCC 7966 / DSM 30187 / BCRC 13018 / CCUG 14551 / JCM 1027 / KCTC 2358 / NCIMB 9240 / NCTC 8049)).